Consider the following 124-residue polypeptide: Large ribosomal subunit protein bL12 (124 aa).

This sequence belongs to the bacterial ribosomal protein bL12 family. As to quaternary structure, homodimer. Part of the ribosomal stalk of the 50S ribosomal subunit. Forms a multimeric L10(L12)X complex, where L10 forms an elongated spine to which 2 to 4 L12 dimers bind in a sequential fashion. Binds GTP-bound translation factors.

Forms part of the ribosomal stalk which helps the ribosome interact with GTP-bound translation factors. Is thus essential for accurate translation. The protein is Large ribosomal subunit protein bL12 of Dehalococcoides mccartyi (strain ATCC BAA-2266 / KCTC 15142 / 195) (Dehalococcoides ethenogenes (strain 195)).